A 262-amino-acid chain; its full sequence is Inner membrane protein YcfZ (262 aa).

Residues 1–4 (MKKF) are Cytoplasmic-facing. A helical transmembrane segment spans residues 5-27 (IILLSLLILLPLTAASKPLIPIM). The Periplasmic portion of the chain corresponds to 28–182 (KTLFTDVTGT…HENAPPGSTN (155 aa)). A helical transmembrane segment spans residues 183 to 202 (TLGFIAWAATFILFSRIFYY). Residues 203–206 (TTRF) are Cytoplasmic-facing. Residues 207 to 229 (IYALKFAVAMTIANMGYQALCLY) traverse the membrane as a helical segment. Topologically, residues 230-238 (IDNSFAITR) are periplasmic. A helical membrane pass occupies residues 239-258 (ISPLWAGLIGVCTFIAALLL). Residues 259-262 (TSKR) are Cytoplasmic-facing.

It localises to the cell inner membrane. This chain is Inner membrane protein YcfZ (ycfZ), found in Escherichia coli (strain K12).